The sequence spans 767 residues: E3 ubiquitin-protein ligase pub1 (767 aa).

The C2 domain occupies 1 to 111 (MSNSAQSRRI…AIGGDEMLTR (111 aa)). Residues 138-158 (LQVPSSAASGARTQRTSITND) show a composition bias toward polar residues. Disordered regions lie at residues 138–216 (LQVP…RRTD) and 252–306 (SASS…RPYF). Thr-156 is modified (phosphothreonine). Over residues 159–176 (PQSSQSSSVSRNPASSRA) the composition is skewed to low complexity. At Ser-178 the chain carries Phosphoserine. At Thr-180 the chain carries Phosphothreonine. Low complexity predominate over residues 184–194 (APAASPASSEP). The WW 1 domain occupies 211–236 (WERRTDNLGRTYYVDHNTRSTTWIRP). The span at 257–286 (NVTEGVQPSSSNAARRTEASVLTSNATTAG) shows a compositional bias: polar residues. 2 consecutive WW domains span residues 294–319 (WEQR…WVDP) and 351–376 (WEMR…WDDP). The region spanning 463–767 (FLLSHEMFNP…VEETIGFGQE (305 aa)) is the HECT domain. Catalysis depends on Cys-735, which acts as the Glycyl thioester intermediate.

The protein resides in the membrane. It localises to the cytoplasm. The enzyme catalyses S-ubiquitinyl-[E2 ubiquitin-conjugating enzyme]-L-cysteine + [acceptor protein]-L-lysine = [E2 ubiquitin-conjugating enzyme]-L-cysteine + N(6)-ubiquitinyl-[acceptor protein]-L-lysine.. Its pathway is protein modification; protein ubiquitination. Its function is as follows. E3 ubiquitin-protein ligase which accepts ubiquitin from an E2 ubiquitin-conjugating enzyme in the form of a thioester and then directly transfers the ubiquitin to targeted substrates. Regulates ubiquitination of cdc25. This Schizosaccharomyces pombe (strain 972 / ATCC 24843) (Fission yeast) protein is E3 ubiquitin-protein ligase pub1 (pub1).